The chain runs to 2541 residues: Highly reducing polyketide synthase otaA (2541 aa).

A Ketosynthase family 3 (KS3) domain is found at 9–431; it reads SEPLAIIGLA…GTNAHVVLED (423 aa). Active-site for beta-ketoacyl synthase activity residues include cysteine 182, histidine 317, and histidine 355. The Malonyl-CoA:ACP transacylase (MAT) domain occupies 571–888; sequence FIFTGQGANW…GSLLKRYETD (318 aa). The N-terminal hotdog fold stretch occupies residues 957–1092; it reads HELLGVPVED…GSVRVETGPH (136 aa). Residues 957-1251 are dehydratase (DH) domain; that stretch reads HELLGVPVED…GLDLVQLPPS (295 aa). In terms of domain architecture, PKS/mFAS DH spans 957-1254; the sequence is HELLGVPVED…LVQLPPSEDA (298 aa). The tract at residues 1108 to 1254 is C-terminal hotdog fold; the sequence is TESVDIAQMY…LVQLPPSEDA (147 aa). Positions 1420 and 1442 each coordinate S-adenosyl-L-methionine. The tract at residues 1433-1605 is methyltransferase (CMeT) domain; the sequence is HAQTGIKVLE…DQELRNAGLQ (173 aa). The 304-residue stretch at 1838 to 2141 folds into the Enoyl reductase (ER) domain; the sequence is HQPNGFHFVE…RQGNAGPWVL (304 aa). The 180-residue stretch at 2165-2344 folds into the Ketoreductase (KR) domain; sequence ASYLLIGGFG…PATSISLGSV (180 aa). Positions 2453-2530 constitute a Carrier domain; the sequence is DAVELVTRAI…QLAQQAAGGS (78 aa). O-(pantetheine 4'-phosphoryl)serine is present on serine 2490.

The cofactor is pantetheine 4'-phosphate.

The catalysed reaction is 4 malonyl-CoA + acetyl-CoA + 5 NADPH + 9 H(+) = 7-methylmellein + 3 CO2 + 5 NADP(+) + 5 CoA + 4 H2O. It functions in the pathway mycotoxin biosynthesis. Highly reducing polyketide synthase; part of the gene cluster that mediates the biosynthesis of ochratoxin A (OTA), a mycotoxin composed of a chlorinated type I polyketide dihydroisocoumarin moiety linked to L-phenylalanine, and demonstrated to have nephrotoxic, immunotoxic, genotoxic, neurotoxic, and teratogenic properties. OtaA catalyzes the condensation of one acetate and 4 malonate units to form the isocoumarin group. The pathway begins with the highly reducing polyketide synthase otaA that catalyzes the formation of the isocoumarin group during the initial stages of biosynthesis, starting from one acetate and 4 malonate units, to originate the characteristic pentaketide skeleton 7-methylmellein (7-MM) of the OTA molecule. The newly identified cyclase otaY might be involved in the polyketide cyclization reaction during the initial steps of the OTA biosynthesis. 7-MM is then oxidized into 7-carboxymellein (also called ochratoxin beta) by the cytochrome P450 monooxygenase otaC. The NRPS encoded by the otaB gene is involved in the linking of phenylalanine to the dihydroisocoumarin ring. The reaction catalyzed by NRPS results in the production of ochratoxin B (OTB), which is the non-chlorinated analog of OTA and which subsequently serves as the substrate of the halogenase otaD for chlorination activity to form the final molecular structure of OTA, containing a chlorine atom in the C-5 position of the molecule. The sequence is that of Highly reducing polyketide synthase otaA from Aspergillus carbonarius (strain ITEM 5010).